Reading from the N-terminus, the 1073-residue chain is Carbamoyl phosphate synthase large chain (1073 aa).

A carboxyphosphate synthetic domain region spans residues 1–402; that stretch reads MPRRIDVRKV…ALQKAIRMLD (402 aa). ATP contacts are provided by Arg-129, Arg-169, Gly-175, Gly-176, Lys-208, Leu-210, Glu-215, Gly-241, Val-242, His-243, Gln-284, and Glu-299. Residues 133-328 form the ATP-grasp 1 domain; sequence RETMMKAGLP…LAYIAAKLAL (196 aa). Mg(2+)-binding residues include Gln-284, Glu-299, and Asn-301. The Mn(2+) site is built by Gln-284, Glu-299, and Asn-301. Residues 403–555 form an oligomerization domain region; the sequence is IGEPGVVAGP…MSYNAYEDDE (153 aa). Residues 556-944 form a carbamoyl phosphate synthetic domain region; the sequence is PITTGRPRLI…LKSWLSVQGN (389 aa). An ATP-grasp 2 domain is found at 681-871; it reads SQLLEELGIK…LMRAAAEAAL (191 aa). Positions 717, 756, 758, 763, 787, 788, 789, 790, 830, and 842 each coordinate ATP. Mg(2+)-binding residues include Gln-830, Glu-842, and Asn-844. The Mn(2+) site is built by Gln-830, Glu-842, and Asn-844. One can recognise an MGS-like domain in the interval 944–1073; sequence NRIPPAGSIV…EYWGPNVEPF (130 aa). The segment at 945–1073 is allosteric domain; the sequence is RIPPAGSIVL…EYWGPNVEPF (129 aa).

The protein belongs to the CarB family. In terms of assembly, composed of two chains; the small (or glutamine) chain promotes the hydrolysis of glutamine to ammonia, which is used by the large (or ammonia) chain to synthesize carbamoyl phosphate. Tetramer of heterodimers (alpha,beta)4. Mg(2+) serves as cofactor. The cofactor is Mn(2+).

The enzyme catalyses hydrogencarbonate + L-glutamine + 2 ATP + H2O = carbamoyl phosphate + L-glutamate + 2 ADP + phosphate + 2 H(+). The catalysed reaction is hydrogencarbonate + NH4(+) + 2 ATP = carbamoyl phosphate + 2 ADP + phosphate + 2 H(+). Its pathway is amino-acid biosynthesis; L-arginine biosynthesis; carbamoyl phosphate from bicarbonate: step 1/1. It functions in the pathway pyrimidine metabolism; UMP biosynthesis via de novo pathway; (S)-dihydroorotate from bicarbonate: step 1/3. Its function is as follows. Large subunit of the glutamine-dependent carbamoyl phosphate synthetase (CPSase). CPSase catalyzes the formation of carbamoyl phosphate from the ammonia moiety of glutamine, carbonate, and phosphate donated by ATP, constituting the first step of 2 biosynthetic pathways, one leading to arginine and/or urea and the other to pyrimidine nucleotides. The large subunit (synthetase) binds the substrates ammonia (free or transferred from glutamine from the small subunit), hydrogencarbonate and ATP and carries out an ATP-coupled ligase reaction, activating hydrogencarbonate by forming carboxy phosphate which reacts with ammonia to form carbamoyl phosphate. This chain is Carbamoyl phosphate synthase large chain, found in Hyperthermus butylicus (strain DSM 5456 / JCM 9403 / PLM1-5).